The chain runs to 260 residues: Snake venom serine protease serpentokallikrein-1 (260 aa).

Residues 1-18 (MVLIRVLANLLILQLSYA) form the signal peptide. Positions 19–24 (QRTSEL) are excised as a propeptide. Residues 25–251 (VIGGDECNIN…HLDWIKSIIA (227 aa)) enclose the Peptidase S1 domain. Disulfide bonds link Cys-31–Cys-165, Cys-52–Cys-68, Cys-102–Cys-258, Cys-144–Cys-212, Cys-176–Cys-191, and Cys-202–Cys-227. Catalysis depends on His-67, which acts as the Charge relay system. 2 N-linked (GlcNAc...) asparagine glycosylation sites follow: Asn-81 and Asn-105. The active-site Charge relay system is Asp-112. 2 N-linked (GlcNAc...) asparagine glycosylation sites follow: Asn-156 and Asn-172. Ser-206 serves as the catalytic Charge relay system.

The protein belongs to the peptidase S1 family. Snake venom subfamily. As to quaternary structure, monomer. As to expression, expressed by the venom gland.

The protein localises to the secreted. Functionally, snake venom serine protease that may act in the hemostasis system of the prey. The polypeptide is Snake venom serine protease serpentokallikrein-1 (Protobothrops mucrosquamatus (Taiwan habu)).